A 230-amino-acid polypeptide reads, in one-letter code: UPF0173 metal-dependent hydrolase Mbar_A3716 (230 aa).

The protein belongs to the UPF0173 family.

This Methanosarcina barkeri (strain Fusaro / DSM 804) protein is UPF0173 metal-dependent hydrolase Mbar_A3716.